A 370-amino-acid polypeptide reads, in one-letter code: DNA replication and repair protein RecF (370 aa).

30–37 contributes to the ATP binding site; it reads GENAQGKT.

It belongs to the RecF family.

The protein localises to the cytoplasm. Its function is as follows. The RecF protein is involved in DNA metabolism; it is required for DNA replication and normal SOS inducibility. RecF binds preferentially to single-stranded, linear DNA. It also seems to bind ATP. The polypeptide is DNA replication and repair protein RecF (Listeria welshimeri serovar 6b (strain ATCC 35897 / DSM 20650 / CCUG 15529 / CIP 8149 / NCTC 11857 / SLCC 5334 / V8)).